A 425-amino-acid polypeptide reads, in one-letter code: Orexin/Hypocretin receptor type 1 (425 aa).

The interval 1-24 (MEPSATPGAQMGVPPGSREPSPVP) is disordered. At 1 to 46 (MEPSATPGAQMGVPPGSREPSPVPPDYEDEFLRYLWRDYLYPKQYE) the chain is on the extracellular side. Residues 26–41 (DYEDEFLRYLWRDYLY) are required for response to orexin-A. Residues 47 to 67 (WVLIAAYVAVFVVALVGNTLV) form a helical membrane-spanning segment. Over 68–82 (CLAVWRNHHMRTVTN) the chain is Cytoplasmic. Residues 83-105 (YFIVNLSLADVLVTAICLPASLL) form a helical membrane-spanning segment. Topologically, residues 106 to 119 (VDITESWLFGHALC) are extracellular. Cysteines 119 and 202 form a disulfide. Residues 120–140 (KVIPYLQAVSVSVAVLTLSFI) form a helical membrane-spanning segment. Residues 141-160 (ALDRWYAICHPLLFKSTARR) lie on the Cytoplasmic side of the membrane. Residues 161–182 (ARGSILGIWAVSLAIMVPQAAV) traverse the membrane as a helical segment. Residues 183–213 (MECSSVLPELANRTRLFSVCDERWADDLYPK) lie on the Extracellular side of the membrane. An N-linked (GlcNAc...) asparagine glycan is attached at asparagine 194. The chain crosses the membrane as a helical span at residues 214–235 (IYHSCFFIVTYLAPLGLMAMAY). Residues 236–298 (FQIFRKLWGR…QMRARRKTAK (63 aa)) lie on the Cytoplasmic side of the membrane. Residues 299–321 (MLMVVLLVFALCYLPISVLNVLK) traverse the membrane as a helical segment. Residue asparagine 318 participates in suvorexant binding. The Extracellular portion of the chain corresponds to 322–336 (RVFGMFRQASDREAV). A helical membrane pass occupies residues 337 to 360 (YACFTFSHWLVYANSAANPIIYNF). Residues 361 to 425 (LSGKFREQFK…VLTSVTTVLP (65 aa)) lie on the Cytoplasmic side of the membrane.

It belongs to the G-protein coupled receptor 1 family.

The protein resides in the cell membrane. In terms of biological role, moderately selective excitatory receptor for orexin-A and, with a lower affinity, for orexin-B neuropeptide. Triggers an increase in cytoplasmic Ca(2+) levels in response to orexin-A binding. This chain is Orexin/Hypocretin receptor type 1, found in Homo sapiens (Human).